The sequence spans 846 residues: Pseudolaratriene synthase, chloroplastic (846 aa).

The transit peptide at 1-58 (MSRFTSATHGLNLSIKMPISVSQVPSIRSNTSKYELQKLRSTGRSVLQTRRQLAIINM) directs the protein to the chloroplast. Residues Asp-595, Asp-599, and Asp-747 each contribute to the Mg(2+) site. A DDXXD motif motif is present at residues 595 to 599 (DDIYD).

Belongs to the terpene synthase family. Mg(2+) is required as a cofactor. As to expression, expressed in young and mature roots. Expressed at low levels in barks.

The protein localises to the plastid. The protein resides in the chloroplast. The catalysed reaction is (2E,6E,10E)-geranylgeranyl diphosphate = pseudolaratriene + diphosphate. The protein operates within terpene metabolism. Its function is as follows. Converts geranylgeranyl diphosphate to an new 5,7-fused bicyclic diterpene, named pseudolaratriene. Catalyzes the first committed step in pseudolaric acid B (PAB) biosynthesis. PAB exhibits antiproliferative activity by inhibiting microtubule polymerization, and has demonstrated antitumor properties against several cancer types. This is Pseudolaratriene synthase, chloroplastic from Pseudolarix amabilis (Golden larch).